A 201-amino-acid polypeptide reads, in one-letter code: Ras-related protein Rab-10 (201 aa).

Residue 16–23 (GDSGVGKT) participates in GTP binding. Residues 38 to 46 (FISTIGIDF) carry the Effector region motif. Residues 64 to 68 (DTAGQ), 122 to 125 (NKCD), and 152 to 154 (SAK) contribute to the GTP site. The disordered stretch occupies residues 175-201 (PDSTDEQSRDTVNPVQPQRQSSSGGCC). The span at 184–201 (DTVNPVQPQRQSSSGGCC) shows a compositional bias: polar residues. Residues Cys-200 and Cys-201 are each lipidated (S-geranylgeranyl cysteine).

It belongs to the small GTPase superfamily. Rab family. Interacts (GTP-bound form) with ehbp-1 (via C-terminal coiled coil). Interacts (GTP-bound form) with cnt-1 (via C-terminal ankyrin repeat). Interacts (GTP-bound form) with rab-5 GAP, tbc-2 (via putative coiled coil domain). Interacts (GTP-bound form) with amph-1. Almost ubiquitously expressed. Expressed in intestine, hypodermis, seam cells, body-wall muscles, many neurons, oviduct sheath cell, spermatheca, coelomocytes and pharyngeal and nerve ring.

It localises to the early endosome membrane. It is found in the late endosome membrane. Its subcellular location is the golgi apparatus membrane. The protein localises to the endosome membrane. The catalysed reaction is GTP + H2O = GDP + phosphate + H(+). Rab activation is generally mediated by a guanine exchange factor (GEF), while inactivation through hydrolysis of bound GTP is catalyzed by a GTPase activating protein (GAP). Tbc-4 is a likely GAP of this rab. Denn-4 is a putative GEF of this rab. Functionally, the small GTPases Rab are key regulators of intracellular membrane trafficking, from the formation of transport vesicles to their fusion with membranes. Rabs cycle between an inactive GDP-bound form and an active GTP-bound form that is able to recruit to membranes different set of downstream effectors directly responsible for vesicle formation, movement, tethering and fusion. Required for basolateral endocytic recycling, the return of macromolecules and fluid from endosomes to the plasma membrane, in polarized epithelial cells of the intestine upstream of rme-1. Involved in the formation of the endosomal tubular network that is required for basolateral recycling of clathrin-independent endocytic cargo such as daf-4 in the intestine. Required for the recruitment of cnt-1 effector to endosomal membranes in the intestinal epithelium, which is important for the regulation of levels of endosomal phosphatidylinositol-4,5-bisphosphate, a key phosphoinositide in membrane traffic, and for the recruitment of endosomal membrane-bending proteins, rme-1 and sdpn-1. Recruits the rab-5 GTPase-activating protein tbc-2 to endosomes where it then inactivates rab-5 resulting in removal of rab-5 from membranes, which is necessary for cargo transport from early endosomes to recycling endosomes in the basolateral intestine. Regulates recycling of synaptic membrane AMPA glutamate receptor, glr-1, from intracellular endosomal compartments back to synapses in a cholesterol-dependent endocytosis pathway functioning after clathrin-independent endocytosis in command interneurons. Regulates neuropeptide release from dense core vesicles (DCVs) of cholinergic motoneurons in cooperation with rab-5. They reciprocally recruit each other's inactivating GAP molecule leading to local exclusion of one or the other rab protein at the Golgi-endosomal interphase at an essential stage during DCV sorting. Regulates membrane trafficking of membranes and dendrite proteins from the Golgi and/or endosomal compartments to plasma membrane during dendrite morphogenesis together with the exocyst complex in the multi-dendritic PVD sensory neurons acting in a cell-autonomous manner and requiring its GTPase activity. Functions cell-autonomously together with the exocyst complex to regulate dendrite morphogenesis and anterior-posterior patterning of the PVD neurons dendritic arbor by balancing the anterograde and retrograde transport via molecular motors unc-116 (kinesin heavy chain) and dhc-1 (dynein heavy chain) to appropriately transport branching factors, such as dma-1, to the specific subcellular regions of the developing dendrite in its GTPase activity-dependent manner. This Caenorhabditis elegans protein is Ras-related protein Rab-10.